A 78-amino-acid chain; its full sequence is UPF0335 protein RBE_1185 (78 aa).

The protein belongs to the UPF0335 family.

The chain is UPF0335 protein RBE_1185 from Rickettsia bellii (strain RML369-C).